Consider the following 272-residue polypeptide: Putative phosphoenolpyruvate synthase regulatory protein (272 aa).

ADP is bound at residue 152–159 (GVSRCGKT).

Belongs to the pyruvate, phosphate/water dikinase regulatory protein family. PSRP subfamily.

It carries out the reaction [pyruvate, water dikinase] + ADP = [pyruvate, water dikinase]-phosphate + AMP + H(+). The catalysed reaction is [pyruvate, water dikinase]-phosphate + phosphate + H(+) = [pyruvate, water dikinase] + diphosphate. In terms of biological role, bifunctional serine/threonine kinase and phosphorylase involved in the regulation of the phosphoenolpyruvate synthase (PEPS) by catalyzing its phosphorylation/dephosphorylation. The polypeptide is Putative phosphoenolpyruvate synthase regulatory protein (Stutzerimonas stutzeri (strain A1501) (Pseudomonas stutzeri)).